Reading from the N-terminus, the 447-residue chain is N-succinylarginine dihydrolase (447 aa).

Residues 19-28 (AGLSFGNEAS), Asn-110, and 137-138 (HR) contribute to the substrate site. Residue Glu-174 is part of the active site. Residue Arg-212 coordinates substrate. His-248 is an active-site residue. Asp-250 and Asn-359 together coordinate substrate. Residue Cys-365 is the Nucleophile of the active site.

The protein belongs to the succinylarginine dihydrolase family. As to quaternary structure, homodimer.

The enzyme catalyses N(2)-succinyl-L-arginine + 2 H2O + 2 H(+) = N(2)-succinyl-L-ornithine + 2 NH4(+) + CO2. The protein operates within amino-acid degradation; L-arginine degradation via AST pathway; L-glutamate and succinate from L-arginine: step 2/5. Catalyzes the hydrolysis of N(2)-succinylarginine into N(2)-succinylornithine, ammonia and CO(2). This is N-succinylarginine dihydrolase from Salmonella arizonae (strain ATCC BAA-731 / CDC346-86 / RSK2980).